The following is a 201-amino-acid chain: Anthranilate synthase component 2 (201 aa).

In terms of domain architecture, Glutamine amidotransferase type-1 spans 3–196 (NILFIDNFDS…IDWALSSTPA (194 aa)). 57–59 (GPG) is an L-glutamine binding site. Cys-84 serves as the catalytic Nucleophile; for GATase activity. Residues Gln-88 and 134–135 (SL) contribute to the L-glutamine site. Active-site for GATase activity residues include His-170 and Glu-172.

Heterotetramer consisting of two non-identical subunits: a beta subunit (TrpG) and a large alpha subunit (TrpE).

The catalysed reaction is chorismate + L-glutamine = anthranilate + pyruvate + L-glutamate + H(+). Its pathway is amino-acid biosynthesis; L-tryptophan biosynthesis; L-tryptophan from chorismate: step 1/5. Part of a heterotetrameric complex that catalyzes the two-step biosynthesis of anthranilate, an intermediate in the biosynthesis of L-tryptophan. In the first step, the glutamine-binding beta subunit (TrpG) of anthranilate synthase (AS) provides the glutamine amidotransferase activity which generates ammonia as a substrate that, along with chorismate, is used in the second step, catalyzed by the large alpha subunit of AS (TrpE) to produce anthranilate. In the absence of TrpG, TrpE can synthesize anthranilate directly from chorismate and high concentrations of ammonia. The protein is Anthranilate synthase component 2 (trpG) of Vibrio cholerae serotype O1 (strain ATCC 39315 / El Tor Inaba N16961).